We begin with the raw amino-acid sequence, 408 residues long: Interferon-activable protein 203 (408 aa).

The Pyrin domain occupies 1 to 87; that stretch reads MAEYKNIVLL…AKKLKTEKAK (87 aa). The disordered stretch occupies residues 84–208; the sequence is EKAKVQEKKK…EGHHQGPKQV (125 aa). Over residues 92 to 102 the composition is skewed to basic residues; sequence KKGKCKTAGKK. Over residues 150-159 the composition is skewed to polar residues; the sequence is AQLPETSGTN. One can recognise an HIN-200 domain in the interval 190–388; that stretch reads TVPKEPSREE…SVRHSYMQVI (199 aa).

This sequence belongs to the HIN-200 family. Constitutively expressed in the thymus, bone marrow and spleen. Isoform 1 and isoform 3 are present in liver (at protein level).

The protein localises to the nucleus. The protein is Interferon-activable protein 203 (Ifi203) of Mus musculus (Mouse).